A 110-amino-acid chain; its full sequence is DNA-binding protein Mhun_3016 (110 aa).

Belongs to the PDCD5 family.

In Methanospirillum hungatei JF-1 (strain ATCC 27890 / DSM 864 / NBRC 100397 / JF-1), this protein is DNA-binding protein Mhun_3016.